The chain runs to 202 residues: tRNA (guanine-N(7)-)-methyltransferase (202 aa).

S-adenosyl-L-methionine contacts are provided by Glu-34, Glu-59, Asp-86, and Asp-107. The active site involves Asp-107. Substrate is bound by residues Lys-111, Asp-143, and 181-184; that span reads TDYE.

Belongs to the class I-like SAM-binding methyltransferase superfamily. TrmB family.

It carries out the reaction guanosine(46) in tRNA + S-adenosyl-L-methionine = N(7)-methylguanosine(46) in tRNA + S-adenosyl-L-homocysteine. The protein operates within tRNA modification; N(7)-methylguanine-tRNA biosynthesis. In terms of biological role, catalyzes the formation of N(7)-methylguanine at position 46 (m7G46) in tRNA. In Metamycoplasma hominis (strain ATCC 23114 / DSM 25592 / NBRC 14850 / NCTC 10111 / PG21) (Mycoplasma hominis), this protein is tRNA (guanine-N(7)-)-methyltransferase.